We begin with the raw amino-acid sequence, 315 residues long: 10-epi-cubebol synthase (315 aa).

Residues D79, N220, S224, and E228 each contribute to the Mg(2+) site. A DDXXD motif motif is present at residues 79–83; the sequence is DDVCE. The short motif at 220–228 is the NXXXSXXXE motif element; that stretch reads NDIYSLRKE.

The protein belongs to the terpene synthase family. Mg(2+) serves as cofactor.

The catalysed reaction is (2E,6E)-farnesyl diphosphate + H2O = 10-epi-cubebol + diphosphate. Catalyzes the cyclization of farnesyl diphosphate (FPP) to 10-epi-cubebol. Is also responsible for the formation of many other sesquiterpenes, mainly cadalanes and cubebanes, including 1,10-di-epi-cubebol and the cadalanes delta-cadinene, T-cadinol and alpha-cadinol. This Sorangium cellulosum (strain So ce56) (Polyangium cellulosum (strain So ce56)) protein is 10-epi-cubebol synthase.